The following is a 262-amino-acid chain: Small ribosomal subunit protein uS2 (262 aa).

The protein belongs to the universal ribosomal protein uS2 family.

This is Small ribosomal subunit protein uS2 from Borrelia garinii subsp. bavariensis (strain ATCC BAA-2496 / DSM 23469 / PBi) (Borreliella bavariensis).